Consider the following 518-residue polypeptide: ATP synthase subunit alpha (518 aa).

Residue 169 to 176 participates in ATP binding; it reads GDRKTGKT.

This sequence belongs to the ATPase alpha/beta chains family. As to quaternary structure, F-type ATPases have 2 components, CF(1) - the catalytic core - and CF(0) - the membrane proton channel. CF(1) has five subunits: alpha(3), beta(3), gamma(1), delta(1), epsilon(1). CF(0) has three main subunits: a(1), b(2) and c(9-12). The alpha and beta chains form an alternating ring which encloses part of the gamma chain. CF(1) is attached to CF(0) by a central stalk formed by the gamma and epsilon chains, while a peripheral stalk is formed by the delta and b chains.

It is found in the cell membrane. It catalyses the reaction ATP + H2O + 4 H(+)(in) = ADP + phosphate + 5 H(+)(out). Functionally, produces ATP from ADP in the presence of a proton gradient across the membrane. The alpha chain is a regulatory subunit. The chain is ATP synthase subunit alpha from Enterococcus faecalis (strain ATCC 700802 / V583).